We begin with the raw amino-acid sequence, 281 residues long: Pantothenate synthetase (281 aa).

An ATP-binding site is contributed by methionine 30–histidine 37. Histidine 37 acts as the Proton donor in catalysis. (R)-pantoate is bound at residue glutamine 61. Glutamine 61 is a beta-alanine binding site. Glycine 149–aspartate 152 lines the ATP pocket. Glutamine 155 is a (R)-pantoate binding site. Residues isoleucine 178 and methionine 186–arginine 189 each bind ATP.

It belongs to the pantothenate synthetase family. As to quaternary structure, homodimer.

It localises to the cytoplasm. The enzyme catalyses (R)-pantoate + beta-alanine + ATP = (R)-pantothenate + AMP + diphosphate + H(+). It functions in the pathway cofactor biosynthesis; (R)-pantothenate biosynthesis; (R)-pantothenate from (R)-pantoate and beta-alanine: step 1/1. In terms of biological role, catalyzes the condensation of pantoate with beta-alanine in an ATP-dependent reaction via a pantoyl-adenylate intermediate. In Shewanella baltica (strain OS195), this protein is Pantothenate synthetase.